The chain runs to 503 residues: Maturase K (503 aa).

Belongs to the intron maturase 2 family. MatK subfamily.

Its subcellular location is the plastid. It is found in the chloroplast. In terms of biological role, usually encoded in the trnK tRNA gene intron. Probably assists in splicing its own and other chloroplast group II introns. The sequence is that of Maturase K from Agonis flexuosa (Australian willow myrtle).